The sequence spans 246 residues: MKKSVGLIGNTGRMGGLLTEALRSHPRCLLGKGFSRRSQTLLKEVVLENDILIDFSAPEVTETLMDILLVTPKPVIIGTTGFSDNSVIRDKLSLLSEYVPVIFSPNMSLGAYVQRRLTACAAKLFDASYDVRILETHHRTKVDAISGTALSLAEAICSAKKDHFGDEQEPCIEMFGSRVGNIFGEHEVSFVGKNERFVIRHEAFSRQTFSDGVLIILRKIMEERLPAGYYTSDVLYESLFQEVVFD.

9 to 14 (GNTGRM) lines the NAD(+) pocket. Residue arginine 36 coordinates NADP(+). Residues 78-80 (GTT) and 104-107 (SPNM) contribute to the NAD(+) site. Histidine 137 acts as the Proton donor/acceptor in catalysis. Residue histidine 138 participates in (S)-2,3,4,5-tetrahydrodipicolinate binding. The Proton donor role is filled by lysine 141. 147-148 (GT) provides a ligand contact to (S)-2,3,4,5-tetrahydrodipicolinate.

The protein belongs to the DapB family.

The protein resides in the cytoplasm. The enzyme catalyses (S)-2,3,4,5-tetrahydrodipicolinate + NAD(+) + H2O = (2S,4S)-4-hydroxy-2,3,4,5-tetrahydrodipicolinate + NADH + H(+). The catalysed reaction is (S)-2,3,4,5-tetrahydrodipicolinate + NADP(+) + H2O = (2S,4S)-4-hydroxy-2,3,4,5-tetrahydrodipicolinate + NADPH + H(+). Its pathway is amino-acid biosynthesis; L-lysine biosynthesis via DAP pathway; (S)-tetrahydrodipicolinate from L-aspartate: step 4/4. Its function is as follows. Catalyzes the conversion of 4-hydroxy-tetrahydrodipicolinate (HTPA) to tetrahydrodipicolinate. This Chlamydia muridarum (strain MoPn / Nigg) protein is 4-hydroxy-tetrahydrodipicolinate reductase.